A 319-amino-acid chain; its full sequence is D-galacturonate reductase (319 aa).

Tyr58 acts as the Proton donor in catalysis. A substrate-binding site is contributed by His121. 216–275 (SPLGAARTKWGDDRVLGSDIIEEIAQAKGKSTAQISLRWVYEQGVSIVTKSYNKERMRQN) contacts NADP(+).

It belongs to the aldo/keto reductase family. In terms of tissue distribution, expressed specifically in the receptacle tissue of the fruit.

It catalyses the reaction L-galactonate + NADP(+) = aldehydo-D-galacturonate + NADPH + H(+). Its pathway is cofactor biosynthesis; L-ascorbate biosynthesis. Functionally, involved in ascorbic acid (vitamin C) biosynthesis. This Fragaria ananassa (Strawberry) protein is D-galacturonate reductase (GALUR).